A 254-amino-acid polypeptide reads, in one-letter code: Alcohol dehydrogenase (254 aa).

The residue at position 1 (methionine 1) is an N-acetylmethionine. NAD(+) is bound at residue 10–33 (FVAALGGIGLDTSRELVKRNLKNF). Residue serine 138 participates in substrate binding. Tyrosine 151 serves as the catalytic Proton acceptor.

This sequence belongs to the short-chain dehydrogenases/reductases (SDR) family. As to quaternary structure, homodimer.

The catalysed reaction is a primary alcohol + NAD(+) = an aldehyde + NADH + H(+). It catalyses the reaction a secondary alcohol + NAD(+) = a ketone + NADH + H(+). This chain is Alcohol dehydrogenase (Adh), found in Drosophila lebanonensis (Fruit fly).